Reading from the N-terminus, the 448-residue chain is FAD-dependent monooxygenase srdH (448 aa).

2 residues coordinate FAD: Glu-32 and Arg-107. Residue Gln-227 is part of the active site. Residue Asp-313 coordinates FAD.

The protein belongs to the paxM FAD-dependent monooxygenase family. The cofactor is FAD.

Its function is as follows. Highly reducing polyketide synthase; part of the gene cluster that mediates the biosynthesis of sordarial, a salicylic aldehyde structurally related to the phytotoxin pyriculol. The most interesting aspect of this pathway is formation of an aromatic product from the highly reducing polyketide synthase srdA. SrdA synthesizes a reduced polyketide chain from one molecule of acetyl-CoA and five molecules of malonyl-CoA. The polyketide chain is then reductively released as an aldehyde. The oxidoreductases srdC, srdD and srdE then oxidize one of the hydroxy groups to facilitate the intramolecular aldol condensation, followed by dehydration to yield a salicylic aldehyde. This aldehyde can undergo facile reduction by endogenous reductases to yield the alcohol 1-hydroxy-2-hydroxymethyl-3-pent-1,3-dienylbenzene. The flavin-dependent srdI counteract against the propensity of the aldehydes to be reduced under physiological conditions and is responsible for reoxidizing 1-hydroxy-2-hydroxymethyl-3-pent-1,3-dienylbenzene back to the salicylic aldehyde. This salicylic aldehyde is then selectively epoxidized by the cupin-domain-containing oxidoreductase srdB to yield the epoxide, which can be hydrolyzed stereoselectively by the hydrolase srdG to give the final product sordarial. The chain is FAD-dependent monooxygenase srdH from Neurospora crassa (strain ATCC 24698 / 74-OR23-1A / CBS 708.71 / DSM 1257 / FGSC 987).